A 496-amino-acid polypeptide reads, in one-letter code: Sodium/sialic acid symporter SiaT (496 aa).

The Periplasmic segment spans residues 1 to 7 (MQLHDFG). Residues 8 to 29 (FINYAVLFGYLAAMLLVGVYFS) traverse the membrane as a helical segment. Over 30 to 46 (KRQKTADDYFRGGGRVP) the chain is Cytoplasmic. Residues 47–59 (GWAAGVSVFATTL) traverse the membrane as a helical segment. A56 contributes to the Na(+) binding site. T58 contributes to the N-acetyl-alpha-neuraminate binding site. L59 provides a ligand contact to Na(+). Residues S60, T63, and Q82 each contribute to the N-acetyl-alpha-neuraminate site. Topologically, residues 60–76 (SSITFMSIPAKAYTSDW) are periplasmic. A helical transmembrane segment spans residues 77–92 (TFIIGQYLAIAILPLV). At 93 to 116 (FYFYIPFFRKLKITSAYEYLEARF) the chain is on the cytoplasmic side. A helical membrane pass occupies residues 117 to 144 (DVRSRLFASLSFMLFHIGRVAIITYLTV). R135 serves as a coordination point for N-acetyl-alpha-neuraminate. The Periplasmic segment spans residues 145 to 154 (LALRPFMGID). A helical transmembrane segment spans residues 155–172 (PVVLIVLISLLCIIYTWM). At 173 to 174 (GG) the chain is on the cytoplasmic side. Residues 175 to 199 (IEGVIWTDVIQGLLLSGGAVLIFIM) traverse the membrane as a helical segment. D182 serves as a coordination point for Na(+). Over 200 to 235 (ICFKVDGGISEIFTTTAQADKFFPTTQWRWSWTDST) the chain is Periplasmic. Residues 236–252 (IPVLMIGFLFANIQQFT) form a helical membrane-spanning segment. The Cytoplasmic segment spans residues 253–272 (ASQDVVQRYIVTDSIKETKR). The helical transmembrane segment at 273–292 (TLITNAKLVAIIPIFFFAIG) threads the bilayer. The Periplasmic portion of the chain corresponds to 293–325 (SALFVYYQQNPSLLPAGFNTGGILPLFIVTEMP). A helical membrane pass occupies residues 326–356 (IGIAGLIIAAIFAAAQSSISSSLNSISSCFN). 5 residues coordinate Na(+): A339, S342, S343, S345, and S346. At 357-374 (SDIYTRLSKSSPSPEQKM) the chain is on the cytoplasmic side. The chain crosses the membrane as a helical span at residues 375-396 (KVAKLVIIVAGIFSSLAAIWLV). Over 397-403 (LSDEAEI) the chain is Periplasmic. A helical transmembrane segment spans residues 404-427 (WDAFNSLIGLMGGPMTGLFMLGIF). At 428-432 (VKRAN) the chain is on the cytoplasmic side. Residues 433-453 (AGSAVVGIIVSIIAVLAARYG) form a helical membrane-spanning segment. Residues 454–457 (SDLN) are Periplasmic-facing. A helical membrane pass occupies residues 458 to 479 (FFFYGVIGSMSVVIAGTITAPL). Residues 480–496 (FAPAKQLSLDDSETSEN) lie on the Cytoplasmic side of the membrane.

This sequence belongs to the sodium:solute symporter (SSF) (TC 2.A.21) family.

Its subcellular location is the cell inner membrane. It catalyses the reaction N-acetyl-alpha-neuraminate(out) + 2 Na(+)(out) = N-acetyl-alpha-neuraminate(in) + 2 Na(+)(in). Its activity is regulated as follows. Both Na(+) sites regulate Neu5Ac transport. The binding energy of the second Na(+) ion may be used to allosterically stabilize the substrate without directly coordinating it. In the absence of external Na(+), the rate is reduced by 78%. Its function is as follows. Symporter that uses the Na(+) gradient as the driving force for the uptake of the sialic acid N-acetylneuraminic acid (Neu5Ac). It allows the use of host-derived Neu5Ac as an energy source by P.mirabilis. Also binds N-glycolylneuraminic acid (Neu5Gc) and ketodeoxynonulosonic acid (KDN). Shows the highest affinity for Neu5Ac and Neu5Gc, which commonly occupy the terminal non-reducing position of mammalian cell surface glycoconjugates. This is Sodium/sialic acid symporter SiaT from Proteus mirabilis (strain HI4320).